The primary structure comprises 312 residues: 1-phosphofructokinase (312 aa).

Residues 223-228 (SLGAEG) and 254-255 (GD) contribute to the ATP site. Asp255 acts as the Proton acceptor in catalysis.

The protein belongs to the carbohydrate kinase PfkB family.

The catalysed reaction is beta-D-fructose 1-phosphate + ATP = beta-D-fructose 1,6-bisphosphate + ADP + H(+). Functionally, catalyzes the ATP-dependent phosphorylation of fructose-l-phosphate to fructose-l,6-bisphosphate. The sequence is that of 1-phosphofructokinase (fruK) from Escherichia coli O157:H7.